Consider the following 639-residue polypeptide: Chaperone protein DnaK (639 aa).

A Phosphothreonine; by autocatalysis modification is found at Thr197. Residues 600-639 form a disordered region; it reads SGAQGGAQAGPDMNAGQSNAGQNNGKQDDNVQDADFEEVK. Positions 613–624 are enriched in low complexity; the sequence is NAGQSNAGQNNG. Over residues 629–639 the composition is skewed to acidic residues; it reads NVQDADFEEVK.

The protein belongs to the heat shock protein 70 family.

In terms of biological role, acts as a chaperone. This Bacteroides fragilis (strain ATCC 25285 / DSM 2151 / CCUG 4856 / JCM 11019 / LMG 10263 / NCTC 9343 / Onslow / VPI 2553 / EN-2) protein is Chaperone protein DnaK.